Reading from the N-terminus, the 538-residue chain is uncharacterized protein (538 aa).

4 disordered regions span residues 20 to 71 (RLSA…GGAQ), 151 to 211 (LWAE…EHPK), 288 to 331 (MLQP…QQHK), and 458 to 482 (EFEKASKLTGPGEASSGVGHSLKNY). Positions 154 to 171 (ESEKSESKGTRRDFRSYD) are enriched in basic and acidic residues.

This is an uncharacterized protein from Homo sapiens (Human).